A 528-amino-acid polypeptide reads, in one-letter code: GMP synthase [glutamine-hydrolyzing] (528 aa).

The Glutamine amidotransferase type-1 domain occupies alanine 22–asparagine 212. The active-site Nucleophile is cysteine 99. Residues histidine 186 and glutamate 188 contribute to the active site. One can recognise a GMPS ATP-PPase domain in the interval tryptophan 213–arginine 403. Position 240-246 (serine 240–leucine 246) interacts with ATP.

As to quaternary structure, homodimer.

The catalysed reaction is XMP + L-glutamine + ATP + H2O = GMP + L-glutamate + AMP + diphosphate + 2 H(+). It functions in the pathway purine metabolism; GMP biosynthesis; GMP from XMP (L-Gln route): step 1/1. In terms of biological role, catalyzes the synthesis of GMP from XMP. This is GMP synthase [glutamine-hydrolyzing] from Borrelia garinii subsp. bavariensis (strain ATCC BAA-2496 / DSM 23469 / PBi) (Borreliella bavariensis).